The chain runs to 74 residues: DNA-directed RNA polymerase subunit omega (74 aa).

Belongs to the RNA polymerase subunit omega family. The RNAP catalytic core consists of 2 alpha, 1 beta, 1 beta' and 1 omega subunit. When a sigma factor is associated with the core the holoenzyme is formed, which can initiate transcription.

The catalysed reaction is RNA(n) + a ribonucleoside 5'-triphosphate = RNA(n+1) + diphosphate. Its function is as follows. Promotes RNA polymerase assembly. Latches the N- and C-terminal regions of the beta' subunit thereby facilitating its interaction with the beta and alpha subunits. The sequence is that of DNA-directed RNA polymerase subunit omega from Hydrogenovibrio crunogenus (strain DSM 25203 / XCL-2) (Thiomicrospira crunogena).